Consider the following 907-residue polypeptide: Leucine-rich repeat-containing G-protein coupled receptor 5 (907 aa).

The signal sequence occupies residues 1–21; it reads MDTSRLGVLLSLPVLLQLATG. Topologically, residues 22 to 561 are extracellular; sequence GSSPRSGVLL…EHLLDGWLIR (540 aa). In terms of domain architecture, LRRNT spans 25-66; it reads PRSGVLLRGCPTHCHCEPDGRMLLRVDCSDLGLSELPSNLSV. Intrachain disulfides connect C34–C40 and C38–C52. N-linked (GlcNAc...) asparagine glycosylation is found at N63 and N77. 16 LRR repeats span residues 67 to 90, 91 to 112, 115 to 136, 139 to 160, 163 to 184, 187 to 208, 211 to 232, 235 to 256, 258 to 279, 282 to 303, 306 to 328, 329 to 350, 353 to 374, 375 to 396, 399 to 420, and 423 to 446; these read FTSYLDLSMNNISQLLPNPLPSLR, FLEELRLAGNALTYIPKGAFTG, SLKVLMLQNNQLRHVPTEALQN, SLQSLRLDANHISYVPPSCFSG, SLRHLWLDDNALTEIPVQAFRS, ALQAMTLALNKIHHIPDYAFGN, SLVVLHLHNNRIHSLGKKCFDG, SLETLDLNYNNLDEFPTAIRTL, NLKELGFHSNNIRSIPEKAFVG, SLITIHFYDNPIQFVGRSAFQH, ELRTLTLNGASQITEFPDLTGTA, NLESLTLTGAQISSLPQTVCNQ, NLQVLDLSYNLLEDLPSFSVCQ, KLQKIDLRHNEIYEIKVDTFQQ, SLRSLNLAWNKIAIIHPNAFST, and SLIKLDLSSNLLSSFPITGLHGLT. N-linked (GlcNAc...) asparagine glycosylation occurs at N208. C348 and C373 are joined by a disulfide. A disulfide bridge connects residues C479 and C541. The N-linked (GlcNAc...) asparagine glycan is linked to N500. The chain crosses the membrane as a helical span at residues 562-582; the sequence is IGVWTIAVLALTCNALVTSTV. Topologically, residues 583–593 are cytoplasmic; that stretch reads FRSPLYISPIK. The chain crosses the membrane as a helical span at residues 594–614; the sequence is LLIGVIAAVNMLTGVSSAVLA. Over 615–638 the chain is Extracellular; that stretch reads GVDAFTFGSFARHGAWWENGVGCH. Residues C637 and C712 are joined by a disulfide bond. Residues 639-659 traverse the membrane as a helical segment; it reads VIGFLSIFASESSVFLLTLAA. The Cytoplasmic portion of the chain corresponds to 660-682; that stretch reads LERGFSVKYSAKFETKAPFSSLK. The chain crosses the membrane as a helical span at residues 683-703; the sequence is VIILLCALLALTMAAVPLLGG. Topologically, residues 704–722 are extracellular; sequence SKYGASPLCLPLPFGEPST. A helical membrane pass occupies residues 723–743; it reads MGYMVALILLNSLCFLMMTIA. At 744 to 767 the chain is on the cytoplasmic side; it reads YTKLYCNLDKGDLENIWDCSMVKH. Residues 768–788 traverse the membrane as a helical segment; sequence IALLLFTNCILNCPVAFLSFS. The Extracellular segment spans residues 789–802; that stretch reads SLINLTFISPEVIK. An N-linked (GlcNAc...) asparagine glycan is attached at N792. A helical transmembrane segment spans residues 803 to 823; that stretch reads FILLVVVPLPACLNPLLYILF. Residues 824-907 are Cytoplasmic-facing; sequence NPHFKEDLVS…LSSVAFVPCL (84 aa).

The protein belongs to the G-protein coupled receptor 1 family. As to quaternary structure, identified in a complex composed of RNF43, LGR5 and RSPO1. Also interacts with other R-spondin ligands, including RSPO2, RSPO3 and RSPO4. Expressed in skeletal muscle, placenta, spinal cord, and various region of brain. Expressed at the base of crypts in colonic and small mucosa stem cells. In premalignant cancer expression is not restricted to the cript base. Overexpressed in cancers of the ovary, colon and liver.

It is found in the cell membrane. The protein localises to the golgi apparatus. It localises to the trans-Golgi network membrane. Functionally, receptor for R-spondins that potentiates the canonical Wnt signaling pathway and acts as a stem cell marker of the intestinal epithelium and the hair follicle. Upon binding to R-spondins (RSPO1, RSPO2, RSPO3 or RSPO4), associates with phosphorylated LRP6 and frizzled receptors that are activated by extracellular Wnt receptors, triggering the canonical Wnt signaling pathway to increase expression of target genes. In contrast to classical G-protein coupled receptors, does not activate heterotrimeric G-proteins to transduce the signal. Involved in the development and/or maintenance of the adult intestinal stem cells during postembryonic development. The protein is Leucine-rich repeat-containing G-protein coupled receptor 5 (LGR5) of Homo sapiens (Human).